We begin with the raw amino-acid sequence, 311 residues long: Methionyl-tRNA formyltransferase (311 aa).

109–112 (SLLP) contacts (6S)-5,6,7,8-tetrahydrofolate.

This sequence belongs to the Fmt family.

It catalyses the reaction L-methionyl-tRNA(fMet) + (6R)-10-formyltetrahydrofolate = N-formyl-L-methionyl-tRNA(fMet) + (6S)-5,6,7,8-tetrahydrofolate + H(+). In terms of biological role, attaches a formyl group to the free amino group of methionyl-tRNA(fMet). The formyl group appears to play a dual role in the initiator identity of N-formylmethionyl-tRNA by promoting its recognition by IF2 and preventing the misappropriation of this tRNA by the elongation apparatus. This Staphylococcus aureus (strain USA300) protein is Methionyl-tRNA formyltransferase.